Here is an 805-residue protein sequence, read N- to C-terminus: ATP-dependent RNA helicase mak-5 (805 aa).

Basic residues predominate over residues 1 to 10 (MAVDKKRKNT). Disordered stretches follow at residues 1–33 (MAVD…KRPV) and 79–189 (VPKS…ELET). The segment covering 85–100 (EVEDDGEEFGGFDDEE) has biased composition (acidic residues). Composition is skewed to basic and acidic residues over residues 110-119 (QEVKTSETKA), 126-143 (AKEK…EQQK), and 164-189 (KNAE…ELET). The short motif at 209-237 (SEWVPLDLSPRMISSIAKLRFSKPTVIQS) is the Q motif element. One can recognise a Helicase ATP-binding domain in the interval 240–463 (IPEIMAGHDV…AGKSKFKATS (224 aa)). 253-260 (ASTGSGKT) contributes to the ATP binding site. Residues 372–375 (DEAD) carry the DEAD box motif. Basic and acidic residues predominate over residues 390-406 (FKALDRPPVEENNEDQK). Positions 390–435 (FKALDRPPVEENNEDQKMGGTDEEGQEEEEEDSEEEEEEEEEHVNK) are disordered. Residues 410–431 (TDEEGQEEEEEDSEEEEEEEEE) show a composition bias toward acidic residues. A Helicase C-terminal domain is found at 510–666 (YLYATLMLQP…NSGNNTKKLV (157 aa)). The interval 729-751 (AGKWGGKGSSKKQKQKEAQQMSK) is disordered.

It belongs to the DEAD box helicase family. DDX24/MAK5 subfamily.

The protein resides in the nucleus. It is found in the nucleolus. It catalyses the reaction ATP + H2O = ADP + phosphate + H(+). Its function is as follows. ATP-binding RNA helicase involved in the biogenesis of 60S ribosomal subunits and is required for the normal formation of 25S and 5.8S rRNAs. This chain is ATP-dependent RNA helicase mak-5 (mak-5), found in Neurospora crassa (strain ATCC 24698 / 74-OR23-1A / CBS 708.71 / DSM 1257 / FGSC 987).